Consider the following 339-residue polypeptide: Ribosomal RNA small subunit methyltransferase C (339 aa).

This sequence belongs to the methyltransferase superfamily. RsmC family. In terms of assembly, monomer.

It localises to the cytoplasm. The enzyme catalyses guanosine(1207) in 16S rRNA + S-adenosyl-L-methionine = N(2)-methylguanosine(1207) in 16S rRNA + S-adenosyl-L-homocysteine + H(+). Specifically methylates the guanine in position 1207 of 16S rRNA in the 30S particle. The sequence is that of Ribosomal RNA small subunit methyltransferase C from Photobacterium profundum (strain SS9).